An 832-amino-acid polypeptide reads, in one-letter code: Valine--tRNA ligase (832 aa).

Residues 41–51 (PNVTGKLHLGH) carry the 'HIGH' region motif. The 'KMSKS' region signature appears at 512–516 (KMSKS). Lysine 515 is a binding site for ATP. Residues 760 to 831 (FIEISQEQKQ…QIYLEELKWK (72 aa)) are a coiled coil.

This sequence belongs to the class-I aminoacyl-tRNA synthetase family. ValS type 1 subfamily. Monomer.

It localises to the cytoplasm. It carries out the reaction tRNA(Val) + L-valine + ATP = L-valyl-tRNA(Val) + AMP + diphosphate. Its function is as follows. Catalyzes the attachment of valine to tRNA(Val). As ValRS can inadvertently accommodate and process structurally similar amino acids such as threonine, to avoid such errors, it has a 'posttransfer' editing activity that hydrolyzes mischarged Thr-tRNA(Val) in a tRNA-dependent manner. The sequence is that of Valine--tRNA ligase from Mycoplasmopsis synoviae (strain 53) (Mycoplasma synoviae).